A 1186-amino-acid polypeptide reads, in one-letter code: ATP-dependent helicase/deoxyribonuclease subunit B (1186 aa).

This sequence belongs to the helicase family. AddB/RexB type 2 subfamily. As to quaternary structure, heterodimer of AddA and RexB. Mg(2+) is required as a cofactor.

In terms of biological role, the heterodimer acts as both an ATP-dependent DNA helicase and an ATP-dependent, dual-direction single-stranded exonuclease. Recognizes the chi site generating a DNA molecule suitable for the initiation of homologous recombination. This subunit has 5' -&gt; 3' nuclease activity but not helicase activity. This Latilactobacillus sakei subsp. sakei (strain 23K) (Lactobacillus sakei subsp. sakei) protein is ATP-dependent helicase/deoxyribonuclease subunit B.